Here is a 569-residue protein sequence, read N- to C-terminus: MKVVATILYLVVLAICGLGIHGAHPTHSAPPTVYPSVSFNLTEANSNEYRHFLQELRGKVILGSHRAFDLPVLNPESKVSDSDRFVLVRLTNPSRKKVTLAIDVVTFYVVAFAQNDRSYFFSGSSEVQRENLFVDTTQEDLNFKGDYTSLEHQVGFGRVYIPLGPKSLAQSISSLSTYKSSAGDNKRLARSLLVVIQMVSEAARFRYIQLRIQASITDAKEFTPDLLMLSMENKWSSMSSEIQQAQPGGAFAQVVKLLDQRNHPIDVTNFRRLFQLTSVAVLLHGCPTVTKMPAYIIKMPVFNGGEDEERCSVVEEVTRRIGGRDGFCAEVKNGDEKDGTPVQLSSCGEQSNQQWTFSTDGTIQSLGKCLTTSSSVMIYNCKVVPPESTKWVVSIDGTITNPRSGLVLTAPKAAEGTLVSLEKNVHAARQGWIVGNVEPLVTFIVGYEQMCLETNPGNNDVSLGDCSVKSASKVDQKWALYGDGTIRVNNDRSLCVTSEGKSSNEPIIILKCLGWANQRWVFNTDGTISNPDSKLVMHVDQNDVPLRKIILSHPSGTSNQQWIASTHPA.

Residues 1 to 28 (MKVVATILYLVVLAICGLGIHGAHPTHS) form the signal peptide. An N-linked (GlcNAc...) asparagine glycan is attached at Asn-40. Residue Glu-201 is part of the active site. Intrachain disulfides connect Cys-286–Cys-311, Cys-328–Cys-347, and Cys-369–Cys-381. 2 consecutive Ricin B-type lectin domains span residues 315 to 435 (EEVT…WIVG) and 437 to 565 (VEPL…WIAS). Residues 325-365 (DGFCAEVKNGDEKDGTPVQLSSCGEQSNQQWTFSTDGTIQS) form a 1-alpha repeat. One copy of the 1-beta repeat lies at 366-401 (LGKCLTTSSSVMIYNCKVVPPESTKWVVSIDGTITN). One copy of the 1-gamma repeat lies at 404–436 (SGLVLTAPKAAEGTLVSLEKNVHAARQGWIVGN). The 2-alpha repeat unit spans residues 448–488 (EQMCLETNPGNNDVSLGDCSVKSASKVDQKWALYGDGTIRV). 2 disulfide bridges follow: Cys-451–Cys-466 and Cys-495–Cys-512. One copy of the 2-beta repeat lies at 492 to 530 (RSLCVTSEGKSSNEPIIILKCLGWANQRWVFNTDGTISN). One copy of the 2-gamma repeat lies at 533-566 (SKLVMHVDQNDVPLRKIILSHPSGTSNQQWIAST).

In the N-terminal section; belongs to the ribosome-inactivating protein family. Type 2 RIP subfamily. In terms of assembly, disulfide-linked dimer of A and B chains.

The catalysed reaction is Endohydrolysis of the N-glycosidic bond at one specific adenosine on the 28S rRNA.. Its function is as follows. The A chain is responsible for inhibiting protein synthesis through the catalytic inactivation of 60S ribosomal subunits by removing adenine from position 4,324 of 28S rRNA. The B chain binds to cell receptors and probably facilitates the entry into the cell of the A chain; B chains are also responsible for cell agglutination (lectin activity). Agglutination is inhibited by Neu5Ac(alpha2,6)lactose, and N-linked glycoproteins such as fetuin and orosomucoid. The chain is Ribosome-inactivating protein SNAI' from Sambucus nigra (European elder).